Here is a 104-residue protein sequence, read N- to C-terminus: Large ribosomal subunit protein uL24 (104 aa).

This sequence belongs to the universal ribosomal protein uL24 family. Part of the 50S ribosomal subunit.

In terms of biological role, one of two assembly initiator proteins, it binds directly to the 5'-end of the 23S rRNA, where it nucleates assembly of the 50S subunit. Functionally, one of the proteins that surrounds the polypeptide exit tunnel on the outside of the subunit. This chain is Large ribosomal subunit protein uL24, found in Pseudomonas savastanoi pv. phaseolicola (strain 1448A / Race 6) (Pseudomonas syringae pv. phaseolicola (strain 1448A / Race 6)).